The following is a 118-amino-acid chain: Small ribosomal subunit protein uS13 (118 aa).

Positions 94–118 (GLPVRGQRTKTNARTRKGPRKPIRK) are disordered.

This sequence belongs to the universal ribosomal protein uS13 family. As to quaternary structure, part of the 30S ribosomal subunit. Forms a loose heterodimer with protein S19. Forms two bridges to the 50S subunit in the 70S ribosome.

Its function is as follows. Located at the top of the head of the 30S subunit, it contacts several helices of the 16S rRNA. In the 70S ribosome it contacts the 23S rRNA (bridge B1a) and protein L5 of the 50S subunit (bridge B1b), connecting the 2 subunits; these bridges are implicated in subunit movement. Contacts the tRNAs in the A and P-sites. The sequence is that of Small ribosomal subunit protein uS13 from Marinobacter nauticus (strain ATCC 700491 / DSM 11845 / VT8) (Marinobacter aquaeolei).